The sequence spans 447 residues: ATP synthase subunit beta (447 aa).

147–154 (GGAGVGKT) provides a ligand contact to ATP.

The protein belongs to the ATPase alpha/beta chains family. F-type ATPases have 2 components, CF(1) - the catalytic core - and CF(0) - the membrane proton channel. CF(1) has five subunits: alpha(3), beta(3), gamma(1), delta(1), epsilon(1). CF(0) has three main subunits: a(1), b(2) and c(9-12). The alpha and beta chains form an alternating ring which encloses part of the gamma chain. CF(1) is attached to CF(0) by a central stalk formed by the gamma and epsilon chains, while a peripheral stalk is formed by the delta and b chains.

It is found in the cell membrane. The enzyme catalyses ATP + H2O + 4 H(+)(in) = ADP + phosphate + 5 H(+)(out). Produces ATP from ADP in the presence of a proton gradient across the membrane. The catalytic sites are hosted primarily by the beta subunits. This is ATP synthase subunit beta from Carsonella ruddii (strain PV).